Here is a 283-residue protein sequence, read N- to C-terminus: Glutamate racemase (283 aa).

Substrate is bound by residues 13–14 (DS) and 45–46 (YG). Cys-76 functions as the Proton donor/acceptor in the catalytic mechanism. Residue 77–78 (NT) coordinates substrate. Cys-186 acts as the Proton donor/acceptor in catalysis. 187-188 (TH) provides a ligand contact to substrate.

The protein belongs to the aspartate/glutamate racemases family.

The catalysed reaction is L-glutamate = D-glutamate. It participates in cell wall biogenesis; peptidoglycan biosynthesis. Functionally, provides the (R)-glutamate required for cell wall biosynthesis. The sequence is that of Glutamate racemase from Microcystis aeruginosa (strain NIES-843 / IAM M-2473).